We begin with the raw amino-acid sequence, 285 residues long: Ribonuclease H1 (285 aa).

A disordered region spans residues 72-122; that stretch reads RSSSSPDGSKGQESAHVQKLQVKTSKRPREPLGEEEEPPEPGAKHTRQDTE. The region spanning 135–281 is the RNase H type-1 domain; it reads MGESVVVYTD…ADRLAREGAK (147 aa). Mg(2+) is bound by residues D144, E185, D209, and D273.

The protein belongs to the RNase H family. Monomer. It depends on Mg(2+) as a cofactor.

It localises to the cytoplasm. The catalysed reaction is Endonucleolytic cleavage to 5'-phosphomonoester.. Its activity is regulated as follows. In the presence of magnesium, manganese is inhibitory. Functionally, endonuclease that specifically degrades the RNA of RNA-DNA hybrids. Plays a role in RNA polymerase II (RNAp II) transcription termination by degrading R-loop RNA-DNA hybrid formation at G-rich pause sites located downstream of the poly(A) site and behind the elongating RNAp II. The protein is Ribonuclease H1 (Rnaseh1) of Rattus norvegicus (Rat).